The primary structure comprises 228 residues: Urease accessory protein UreF (228 aa).

This sequence belongs to the UreF family. UreD, UreF and UreG form a complex that acts as a GTP-hydrolysis-dependent molecular chaperone, activating the urease apoprotein by helping to assemble the nickel containing metallocenter of UreC. The UreE protein probably delivers the nickel.

It is found in the cytoplasm. Required for maturation of urease via the functional incorporation of the urease nickel metallocenter. In Prochlorococcus marinus (strain MIT 9312), this protein is Urease accessory protein UreF.